We begin with the raw amino-acid sequence, 387 residues long: S-adenosylmethionine synthase (387 aa).

An ATP-binding site is contributed by His17. Mg(2+) is bound at residue Asp19. Glu45 contributes to the K(+) binding site. Residues Glu58 and Gln101 each contribute to the L-methionine site. Residues 101–111 (QSPDIAQGVDR) are flexible loop. Residues 168-170 (DAK), 234-235 (RF), Asp243, 249-250 (RK), Ala266, and Lys270 contribute to the ATP site. Asp243 contributes to the L-methionine binding site. Lys274 contributes to the L-methionine binding site.

The protein belongs to the AdoMet synthase family. In terms of assembly, homotetramer; dimer of dimers. The cofactor is Mg(2+). K(+) serves as cofactor.

It is found in the cytoplasm. It catalyses the reaction L-methionine + ATP + H2O = S-adenosyl-L-methionine + phosphate + diphosphate. It participates in amino-acid biosynthesis; S-adenosyl-L-methionine biosynthesis; S-adenosyl-L-methionine from L-methionine: step 1/1. Catalyzes the formation of S-adenosylmethionine (AdoMet) from methionine and ATP. The overall synthetic reaction is composed of two sequential steps, AdoMet formation and the subsequent tripolyphosphate hydrolysis which occurs prior to release of AdoMet from the enzyme. The chain is S-adenosylmethionine synthase from Bordetella petrii (strain ATCC BAA-461 / DSM 12804 / CCUG 43448).